The chain runs to 657 residues: Glycogen debranching enzyme (657 aa).

Residue aspartate 336 is the Nucleophile of the active site. Residue glutamate 371 is the Proton donor of the active site. Residues 460-479 (ANGEENRDGTNNNYSNNHGK) are disordered.

Belongs to the glycosyl hydrolase 13 family.

The enzyme catalyses Hydrolysis of (1-&gt;6)-alpha-D-glucosidic linkages to branches with degrees of polymerization of three or four glucose residues in limit dextrin.. It participates in glycan degradation; glycogen degradation. Functionally, removes maltotriose and maltotetraose chains that are attached by 1,6-alpha-linkage to the limit dextrin main chain, generating a debranched limit dextrin. This is Glycogen debranching enzyme from Escherichia coli O17:K52:H18 (strain UMN026 / ExPEC).